Reading from the N-terminus, the 686-residue chain is Secretin GspD 2 (686 aa).

The first 40 residues, 1 to 40 (MFWRDITLSVWRKKTTGLKTKKRLLPLVLAAALCSSPVWA), serve as a signal peptide directing secretion. The interval 41–140 (EEATFTANFK…VGEGSDNYAG (100 aa)) is N0, contacts GspC2. Residues 142 to 206 (EMVTKVVPVR…EVIQRVDHAG (65 aa)) form an N1 region. The interval 207 to 279 (NRTEEVIPLD…LIRRLDSEME (73 aa)) is N2. Residues 282–357 (GNSQVFYLKY…SLQSVIEQLD (76 aa)) form an N3 region. Positions 360 to 627 (RAQVHVEALI…VFIRPTILRD (268 aa)) are secretin. The tract at residues 414-433 (PQKGSTVISENGATTINPDT) is cap gate. The interval 629-686 (MAADGVSQRKYNYMRAEQIYRDEQGLSLMPHTAQPVLPAQNQALPPEVRAFLNAGRTR) is s domain, contacts AspS2.

The protein belongs to the bacterial secretin family. GSP D subfamily. In terms of assembly, forms a cylindrical channel with 15 subunits, each of which interacts with the surrounding pilotin AspS2 proteins (also called GspS-beta). Interacts with inner cell membrane protein GspC2 in the periplasm. Forms multimers in the outer membrane. The isolated N0 domain forms dimers that self-assemble into rings.

Its subcellular location is the cell outer membrane. Part of a type II secretion system (T2SS, formerly general secretion pathway, GSP) for the export of folded proteins across the outer membrane. This subunit forms the outer membrane channel. The chain is Secretin GspD 2 (gspD2) from Escherichia coli O78:H11 (strain H10407 / ETEC).